The following is a 591-amino-acid chain: L-fucose isomerase (591 aa).

Residues Glu-337 and Asp-361 each act as proton acceptor in the active site. Mn(2+) contacts are provided by Glu-337, Asp-361, and His-528.

This sequence belongs to the L-fucose isomerase family. Homohexamer. Mn(2+) serves as cofactor.

Its subcellular location is the cytoplasm. The enzyme catalyses L-fucose = L-fuculose. It functions in the pathway carbohydrate degradation; L-fucose degradation; L-lactaldehyde and glycerone phosphate from L-fucose: step 1/3. In terms of biological role, converts the aldose L-fucose into the corresponding ketose L-fuculose. This chain is L-fucose isomerase, found in Escherichia coli O6:K15:H31 (strain 536 / UPEC).